Here is a 584-residue protein sequence, read N- to C-terminus: Lamin-B1 (584 aa).

The disordered stretch occupies residues 1-22 (MAAAVAPLSPQPRGAAASAALS). A head region spans residues 2–33 (AAAVAPLSPQPRGAAASAALSPTRISRLQEKE). S22 carries the phosphoserine modification. An IF rod domain is found at 31-387 (EKEELRQLND…KLLESEEERL (357 aa)). Residues 34 to 70 (ELRQLNDRLAVYIDKVRSLETENSALQRRVSEREQVC) are coil 1A. The coil 1B stretch occupies residues 81–218 (FETELADARK…NVYEEEIKET (138 aa)). The tract at residues 243 to 385 (QALKEIREQH…YRKLLESEEE (143 aa)) is coil 2. The tail stretch occupies residues 386–584 (RLRLSPGPSS…RKPERSCVVM (199 aa)). 2 disordered regions span residues 388 to 431 (RLSP…SVSI) and 548 to 584 (TVNEGEEEEEEGEEEILEDVIHQQGSPRKPERSCVVM). Low complexity predominate over residues 394-408 (SSRVTVSRASSSRSV). Residues 414-419 (KRKRID) carry the Nuclear localization signal motif. Residues 429-545 (VSISHSASAT…EEVAQRSTVF (117 aa)) enclose the LTD domain. Residues 551–565 (EGEEEEEEGEEEILE) are compositionally biased toward acidic residues. The segment covering 575-584 (RKPERSCVVM) has biased composition (basic and acidic residues). C581 bears the Cysteine methyl ester mark. C581 is lipidated: S-farnesyl cysteine. A propeptide spans 582 to 584 (VVM) (removed in mature form).

This sequence belongs to the intermediate filament family. As to quaternary structure, homodimer. Lamin dimers then assemble into dimeric head-to-tail polymers. Ultimately, two head-to-tail polymers assemble laterally into a protofilament with a uniformly shaped rod of 3.5 nm in diameter. Post-translationally, phosphorylation plays a key role in lamin organization, subcellular localization and nuclear envelope disintegration. Phosphorylation by CDK1 at Ser-22 at the onset of mitosis drives lamin disassembly and nuclear envelope breakdown.

The protein localises to the nucleus lamina. It is found in the nucleus envelope. Its subcellular location is the nucleus. It localises to the nucleoplasm. The protein resides in the nucleus matrix. Lamins are intermediate filament proteins that assemble into a filamentous meshwork, and which constitute the major components of the nuclear lamina, a fibrous layer on the nucleoplasmic side of the inner nuclear membrane. Lamins provide a framework for the nuclear envelope, bridging the nuclear envelope and chromatin. Plays an important role in nuclear assembly, chromatin organization, nuclear membrane and telomere dynamics. This chain is Lamin-B1 (LMNB1), found in Gallus gallus (Chicken).